The following is a 314-amino-acid chain: Olfactory receptor 11H7 (314 aa).

The Extracellular segment spans residues 1-24; sequence MNNSQISTVTQFVLLGFPGPWKIQ. A glycan (N-linked (GlcNAc...) asparagine) is linked at N2. The helical transmembrane segment at 25-45 threads the bilayer; it reads IIFFSMILLVYIFTLTGNMAI. Residues 46–57 are Cytoplasmic-facing; it reads ICAVRWDHRLHT. The helical transmembrane segment at 58-78 threads the bilayer; sequence PMYVLLANFSFLEIWYVTCTV. Residues 79–97 lie on the Extracellular side of the membrane; it reads PNMLVNFFSKTKTISFSGC. Residues C97 and C179 are joined by a disulfide bond. Residues 98-118 form a helical membrane-spanning segment; sequence FTQFHFFFSLGTTECFFLCVM. Topologically, residues 119 to 142 are cytoplasmic; the sequence is AYDRYLAICHPLHYPSIMTGQLCG. Residues 143-163 form a helical membrane-spanning segment; sequence ILVSLCWLIGFLGHSISIFFI. Over 164 to 201 the chain is Extracellular; that stretch reads FQLPFCGPNIIDHFLCDVDPLMALSSAPTHIIGHVFHS. A helical transmembrane segment spans residues 202 to 222; that stretch reads VSSLFINLTMVYILGSYTLVL. Topologically, residues 223–244 are cytoplasmic; sequence RTVLQVPSSAGWQKAISTCGSH. Residues 245–265 form a helical membrane-spanning segment; that stretch reads LVVVSLFYGAIMLMYVSPTPG. The Extracellular portion of the chain corresponds to 266–271; that stretch reads NSVAMH. Residues 272-292 form a helical membrane-spanning segment; it reads KLITLIYSVVTPVLNPLIYSL. Residues 293 to 314 are Cytoplasmic-facing; the sequence is RNKDMKYALHHVFCGMRIIQRS.

This sequence belongs to the G-protein coupled receptor 1 family.

Its subcellular location is the cell membrane. In terms of biological role, odorant receptor. Activated by isovaleric acid. This chain is Olfactory receptor 11H7 (OR11H7), found in Homo sapiens (Human).